Here is a 151-residue protein sequence, read N- to C-terminus: Methylglyoxal synthase (151 aa).

An MGS-like domain is found at 1–151 (MKKTTRTMAA…DYQAYLAERT (151 aa)). Substrate contacts are provided by residues His19, Lys23, 45 to 48 (TGTT), and 65 to 66 (SG). Asp71 (proton donor/acceptor) is an active-site residue. His98 is a binding site for substrate.

It belongs to the methylglyoxal synthase family.

It catalyses the reaction dihydroxyacetone phosphate = methylglyoxal + phosphate. Functionally, catalyzes the formation of methylglyoxal from dihydroxyacetone phosphate. In Vibrio cholerae serotype O1 (strain ATCC 39541 / Classical Ogawa 395 / O395), this protein is Methylglyoxal synthase.